The sequence spans 102 residues: Glutaredoxin-C14 (102 aa).

Positions methionine 1–histidine 101 constitute a Glutaredoxin domain. Cysteine 21 and cysteine 24 form a disulfide bridge.

It belongs to the glutaredoxin family. CC-type subfamily.

Its subcellular location is the cytoplasm. In terms of biological role, has a glutathione-disulfide oxidoreductase activity in the presence of NADPH and glutathione reductase. Reduces low molecular weight disulfides and proteins. The chain is Glutaredoxin-C14 (GRXC14) from Arabidopsis thaliana (Mouse-ear cress).